Reading from the N-terminus, the 469-residue chain is Nuclear hormone receptor family member nhr-154 (469 aa).

The nuclear receptor DNA-binding region spans 80-159; that stretch reads PSKCLVCRNP…VGMNPMAIQA (80 aa). NR C4-type zinc fingers lie at residues 83-103 and 119-142; these read CLVCRNPAIGYHYDVPSCNGC and CAKQKKCMDGTEPVDMSKRLCRAC. Positions 230–459 constitute an NR LBD domain; that stretch reads LDSKPVLVVT…KMGTTFRKCI (230 aa).

The protein belongs to the nuclear hormone receptor family.

The protein localises to the nucleus. Its function is as follows. Orphan nuclear receptor. The sequence is that of Nuclear hormone receptor family member nhr-154 (nhr-154) from Caenorhabditis elegans.